Reading from the N-terminus, the 235-residue chain is Probable inactive serine protease 37 (235 aa).

A signal peptide spans 1–19 (MKYVFYLGVLAGTFFFADS). A Peptidase S1 domain is found at 20–233 (SVQKEDPAPY…YVSWIENTAK (214 aa)). Intrachain disulfides connect Cys-40–Cys-56, Cys-131–Cys-198, and Cys-163–Cys-177.

This sequence belongs to the peptidase S1 family. Testis-specific. Expressed in spermatids (at protein level).

It is found in the cytoplasmic vesicle. Its subcellular location is the secretory vesicle. The protein localises to the acrosome. It localises to the secreted. Functionally, plays a role in male fertility. May have a role in sperm migration or binding to zona-intact eggs. Involved in the activation of the proacrosin/acrosin system. The chain is Probable inactive serine protease 37 from Homo sapiens (Human).